The following is a 145-amino-acid chain: MNKIERQQQIKQLIQAEHIGTQEEIRRLLQKDGIVVTQATLSRDLREIGLLKLRDDRGKLYYSLSEPVATPFSPDVRFYVLKVDRAGFMLVLHTNLGEADVLANLIDNDAIEDVLGTIAGADTLLVICRDEEIAKRFEKDLAAGL.

It belongs to the ArgR family.

It localises to the cytoplasm. It functions in the pathway amino-acid biosynthesis; L-arginine biosynthesis [regulation]. In terms of biological role, regulates arginine biosynthesis genes. This Streptococcus equi subsp. zooepidemicus (strain H70) protein is Arginine repressor.